Here is a 238-residue protein sequence, read N- to C-terminus: 2-C-methyl-D-erythritol 4-phosphate cytidylyltransferase (238 aa).

Belongs to the IspD/TarI cytidylyltransferase family. IspD subfamily.

The enzyme catalyses 2-C-methyl-D-erythritol 4-phosphate + CTP + H(+) = 4-CDP-2-C-methyl-D-erythritol + diphosphate. The protein operates within isoprenoid biosynthesis; isopentenyl diphosphate biosynthesis via DXP pathway; isopentenyl diphosphate from 1-deoxy-D-xylulose 5-phosphate: step 2/6. Its function is as follows. Catalyzes the formation of 4-diphosphocytidyl-2-C-methyl-D-erythritol from CTP and 2-C-methyl-D-erythritol 4-phosphate (MEP). This Acinetobacter baumannii (strain AYE) protein is 2-C-methyl-D-erythritol 4-phosphate cytidylyltransferase.